The following is a 354-amino-acid chain: Petrobactin import system permease protein FatC (354 aa).

9 helical membrane passes run 37-57, 77-97, 116-136, 141-161, 168-188, 214-234, 259-279, 302-322, and 329-349; these read YWIV…GLLV, IVAI…TVAF, LYSA…LINF, SFLF…GWLL, LQLM…VSTF, PAYF…IFAH, VIYT…LIGP, YIFP…YFLM, and QGVV…TIVL.

It belongs to the binding-protein-dependent transport system permease family. FecCD subfamily. The complex is composed of two ATP-binding proteins (FatE), two transmembrane proteins (FatC and FatD) and a solute-binding protein (FpuA).

It localises to the cell membrane. In terms of biological role, part of an ABC transporter complex involved in ferric-petrobactin uptake. Probably responsible for the translocation of the substrate across the membrane. The chain is Petrobactin import system permease protein FatC from Bacillus anthracis.